Consider the following 824-residue polypeptide: Leucine--tRNA ligase (824 aa).

The short motif at 42–52 is the 'HIGH' region element; it reads PYPSGKIHMGH. A 'KMSKS' region motif is present at residues 581-585; sequence KMSKS. Lysine 584 lines the ATP pocket.

It belongs to the class-I aminoacyl-tRNA synthetase family.

It is found in the cytoplasm. It catalyses the reaction tRNA(Leu) + L-leucine + ATP = L-leucyl-tRNA(Leu) + AMP + diphosphate. The protein is Leucine--tRNA ligase of Geobacter sp. (strain M21).